The following is a 161-amino-acid chain: Allophycocyanin subunit alpha-B (161 aa).

Asparagine 71 carries the N4-methylasparagine modification. Cysteine 81 is a (2R,3E)-phycocyanobilin binding site.

The protein belongs to the phycobiliprotein family. In terms of assembly, heterohexamer of two alpha chains, one alpha-B chain and three beta chains. Post-translationally, contains one covalently linked phycocyanobilin chromophore. The chromophore is added by phycocyanobilin lyase CpcS 1.

The protein localises to the cellular thylakoid membrane. Its function is as follows. Light-harvesting photosynthetic bile pigment-protein from the phycobiliprotein complex. Allophycocyanin has a maximum absorption at approximately 654 nanometers. The polypeptide is Allophycocyanin subunit alpha-B (apcD) (Nostoc sp. (strain PCC 7120 / SAG 25.82 / UTEX 2576)).